Reading from the N-terminus, the 936-residue chain is Periplasmic nitrate reductase (936 aa).

The segment at residues Met1–Ala31 is a signal peptide (tat-type signal). Residues Trp40–Asp96 enclose the 4Fe-4S Mo/W bis-MGD-type domain. [4Fe-4S] cluster-binding residues include Cys47, Cys50, Cys54, and Cys82. Mo-bis(molybdopterin guanine dinucleotide)-binding positions include Lys84, Gln152, Asn177, Cys181, Trp214–Met221, Ser246–His250, Met424, Gln428, Asn534, Ser559–Asp560, Lys582, Asp609, and Thr826–Ser835. Substrate is bound at residue Trp902. The Mo-bis(molybdopterin guanine dinucleotide) site is built by Asn910 and Lys927.

Belongs to the prokaryotic molybdopterin-containing oxidoreductase family. NasA/NapA/NarB subfamily. Component of the periplasmic nitrate reductase NapAB complex composed of NapA and NapB. [4Fe-4S] cluster serves as cofactor. Mo-bis(molybdopterin guanine dinucleotide) is required as a cofactor. In terms of processing, predicted to be exported by the Tat system. The position of the signal peptide cleavage has not been experimentally proven.

The protein localises to the periplasm. The enzyme catalyses 2 Fe(II)-[cytochrome] + nitrate + 2 H(+) = 2 Fe(III)-[cytochrome] + nitrite + H2O. Functionally, catalytic subunit of the periplasmic nitrate reductase complex NapAB. Receives electrons from NapB and catalyzes the reduction of nitrate to nitrite. The sequence is that of Periplasmic nitrate reductase from Nitratiruptor sp. (strain SB155-2).